Consider the following 505-residue polypeptide: Cytochrome P450 71A2 (505 aa).

The helical transmembrane segment at 7 to 27 threads the bilayer; it reads WYSLLIPLFVFIFLLIHHCFF. Residue Cys448 participates in heme binding.

It belongs to the cytochrome P450 family. Heme serves as cofactor.

It is found in the membrane. May have a role in maturation, such as during flavor formation or other metabolite production specific to aging tissues. The sequence is that of Cytochrome P450 71A2 (CYP71A2) from Solanum melongena (Eggplant).